The primary structure comprises 91 residues: Potassium channel toxin TdiKIK (91 aa).

Residues 1 to 25 form the signal peptide; the sequence is MVATNRCCVFALLVALLLIHSLAEA. A propeptide spanning residues 26–44 is cleaved from the precursor; the sequence is GKGKEVLGKIKNKLVEVKE. Residues 58-91 enclose the BetaSPN-type CS-alpha/beta domain; the sequence is EYACPVIDKFCEDHCAAKNAIGKCDDFKCQCLNS. 3 cysteine pairs are disulfide-bonded: Cys61–Cys81, Cys68–Cys86, and Cys72–Cys88.

As to expression, expressed by the venom gland.

It is found in the secreted. The full peptide presents antibacterial and cytotoxic activities. The synthetic C-terminus (AA 33-76) inhibits voltage-gated potassium channels Kv1.1/KCNA1, Kv1.2/KCNA2, and Kv1.3/KCNA3. The sequence is that of Potassium channel toxin TdiKIK from Tityus discrepans (Venezuelan scorpion).